We begin with the raw amino-acid sequence, 208 residues long: Protein-L-isoaspartate O-methyltransferase (208 aa).

S59 is a catalytic residue.

Belongs to the methyltransferase superfamily. L-isoaspartyl/D-aspartyl protein methyltransferase family.

It is found in the cytoplasm. It carries out the reaction [protein]-L-isoaspartate + S-adenosyl-L-methionine = [protein]-L-isoaspartate alpha-methyl ester + S-adenosyl-L-homocysteine. Catalyzes the methyl esterification of L-isoaspartyl residues in peptides and proteins that result from spontaneous decomposition of normal L-aspartyl and L-asparaginyl residues. It plays a role in the repair and/or degradation of damaged proteins. This Vibrio parahaemolyticus serotype O3:K6 (strain RIMD 2210633) protein is Protein-L-isoaspartate O-methyltransferase.